We begin with the raw amino-acid sequence, 95 residues long: Putative septation protein SpoVG (95 aa).

Belongs to the SpoVG family.

Functionally, could be involved in septation. The protein is Putative septation protein SpoVG of Clostridium acetobutylicum (strain ATCC 824 / DSM 792 / JCM 1419 / IAM 19013 / LMG 5710 / NBRC 13948 / NRRL B-527 / VKM B-1787 / 2291 / W).